The primary structure comprises 1301 residues: DNA-directed RNA polymerase subunit beta (1301 aa).

Belongs to the RNA polymerase beta chain family. As to quaternary structure, the RNAP catalytic core consists of 2 alpha, 1 beta, 1 beta' and 1 omega subunit. When a sigma factor is associated with the core the holoenzyme is formed, which can initiate transcription.

The catalysed reaction is RNA(n) + a ribonucleoside 5'-triphosphate = RNA(n+1) + diphosphate. In terms of biological role, DNA-dependent RNA polymerase catalyzes the transcription of DNA into RNA using the four ribonucleoside triphosphates as substrates. This is DNA-directed RNA polymerase subunit beta from Chlorobium luteolum (strain DSM 273 / BCRC 81028 / 2530) (Pelodictyon luteolum).